Here is a 189-residue protein sequence, read N- to C-terminus: MATDIFNSKNLAVQAQKKILGKMASSKYIATSLIDDTSGEVLDELYQVTREYTQNKKDAEKITKNLIKTVIKLAVLYRNNQFNEEEIGLMEKFKRKVHQLAMTVVSFYQVEYTFDRNVLSKLLNECRELLHQVIQRHLTAKSHGRVNNVFDHFSNCEFLAALYNPFGPYKKHLQRLCNGVNKMLDEDNI.

Belongs to the TNFAIP8 family.

The protein localises to the cytoplasm. In terms of biological role, acts as a negative mediator of apoptosis. The polypeptide is Tumor necrosis factor alpha-induced protein 8 (tnfaip8) (Xenopus laevis (African clawed frog)).